The following is a 681-amino-acid chain: DNA-directed RNA polymerase subunit beta' (681 aa).

Residues cysteine 69, cysteine 71, cysteine 87, and cysteine 90 each contribute to the Zn(2+) site. Mg(2+) is bound by residues aspartate 489, aspartate 491, and aspartate 493.

The protein belongs to the RNA polymerase beta' chain family. RpoC1 subfamily. In terms of assembly, in plastids the minimal PEP RNA polymerase catalytic core is composed of four subunits: alpha, beta, beta', and beta''. When a (nuclear-encoded) sigma factor is associated with the core the holoenzyme is formed, which can initiate transcription. It depends on Mg(2+) as a cofactor. Zn(2+) serves as cofactor.

It localises to the plastid. Its subcellular location is the chloroplast. The enzyme catalyses RNA(n) + a ribonucleoside 5'-triphosphate = RNA(n+1) + diphosphate. Its function is as follows. DNA-dependent RNA polymerase catalyzes the transcription of DNA into RNA using the four ribonucleoside triphosphates as substrates. The sequence is that of DNA-directed RNA polymerase subunit beta' from Cycas taitungensis (Prince sago).